A 549-amino-acid chain; its full sequence is Chaperonin GroEL (549 aa).

Residues 30–33 (TLGP), Lys51, 87–91 (DGTTT), Gly415, 479–481 (NAA), and Asp495 each bind ATP.

The protein belongs to the chaperonin (HSP60) family. In terms of assembly, forms a cylinder of 14 subunits composed of two heptameric rings stacked back-to-back. Interacts with the co-chaperonin GroES.

It localises to the cytoplasm. It catalyses the reaction ATP + H2O + a folded polypeptide = ADP + phosphate + an unfolded polypeptide.. In terms of biological role, together with its co-chaperonin GroES, plays an essential role in assisting protein folding. The GroEL-GroES system forms a nano-cage that allows encapsulation of the non-native substrate proteins and provides a physical environment optimized to promote and accelerate protein folding. The protein is Chaperonin GroEL of Leptothrix cholodnii (strain ATCC 51168 / LMG 8142 / SP-6) (Leptothrix discophora (strain SP-6)).